A 234-amino-acid polypeptide reads, in one-letter code: Sugar fermentation stimulation protein A (234 aa).

A DNA-binding region (H-T-H motif) is located at residues 201–220; that stretch reads LLSEAQQRGVEILAYKAEIS.

It belongs to the SfsA family.

Its function is as follows. Binds to DNA non-specifically. Could be a regulatory factor involved in maltose metabolism. The sequence is that of Sugar fermentation stimulation protein A from Shigella dysenteriae serotype 1 (strain Sd197).